The primary structure comprises 568 residues: Phosphoprotein (568 aa).

The interval 1 to 24 (MDQDAFFFERDPEAEGEAPRKQES) is disordered. Basic and acidic residues predominate over residues 7-24 (FFERDPEAEGEAPRKQES). Residues 33–41 (DVVLSYKPT) are N0 binding. The interval 45–324 (EDRSWLHNII…SNEEGTSNTS (280 aa)) is disordered. 3 stretches are compositionally biased toward basic and acidic residues: residues 56-105 (NPKE…HARI), 129-144 (GDER…PNER), and 151-167 (PTDE…KREE). Residues 179–216 (GSTSLSDDGEGRTNNNGRSMETSSTHSTRITDVITNPS) show a composition bias toward polar residues. Residues 239–253 (TRSERTQNSELHKST) show a composition bias toward basic and acidic residues. Residues 295 to 304 (TTNNANNNAK) show a composition bias toward low complexity. Residues 344–411 (FELSRRASHQ…SSRDLHKRFS (68 aa)) are multimerization. A coiled-coil region spans residues 387–416 (EENRTLLKQIQEEIDSSRDLHKRFSEYQKE). A l protein binding region spans residues 412 to 445 (EYQKEQNSLMMANLSTLHIITDRGGKTGDPSDTT). Disordered regions lie at residues 434–455 (RGGK…TKGK) and 493–513 (PVLE…LIPS). A compositionally biased stretch (polar residues) spans 441–450 (PSDTTRSPSV). Residues 479–568 (DLIREDELRE…FEEDIDSLTN (90 aa)) form an interaction with the nucleocapsid (N-RNA) region.

The protein belongs to the respirovirus P protein family. As to quaternary structure, homotetramer. Interacts (via multimerization domain) with polymerase L; this interaction forms the polymerase complex. Interacts (via N-terminus) with N0; this interaction allows P to chaperon N0 before encapsidation and form the N-P complex. Interacts (via C-terminus) with N-RNA template; this interaction positions the polymerase on the template.

Functionally, essential cofactor of the RNA polymerase L that plays a central role in the transcription and replication by forming the polymerase complex with RNA polymerase L and recruiting L to the genomic N-RNA template for RNA synthesis. Also plays a central role in the encapsidation of nascent RNA chains by forming the encapsidation complex with the nucleocapsid protein N (N-P complex). Acts as a chaperone for newly synthesized free N protein, so-called N0, allowing encapsidation of nascent RNA chains during replication. The nucleoprotein protein N prevents excessive phosphorylation of P, which leads to down-regulation of viral transcription/ replication. Participates, together with N, in the formation of viral factories (viroplasms), which are large inclusions in the host cytoplasm where replication takes place. Recruits host PI4KB and remodel the host endoplasmic reticulum membrane to form viral replication factories. This chain is Phosphoprotein (P/C), found in Homo sapiens (Human).